The following is a 600-amino-acid chain: DNA ligase (600 aa).

Asp258 is an ATP binding site. Lys260 functions as the N6-AMP-lysine intermediate in the catalytic mechanism. Arg265, Arg280, Glu310, Phe350, Arg427, and Lys433 together coordinate ATP.

Belongs to the ATP-dependent DNA ligase family. Requires Mg(2+) as cofactor.

It catalyses the reaction ATP + (deoxyribonucleotide)n-3'-hydroxyl + 5'-phospho-(deoxyribonucleotide)m = (deoxyribonucleotide)n+m + AMP + diphosphate.. With respect to regulation, inhibited by PCNA123 and PCNA323. DNA ligase that seals nicks in double-stranded DNA during DNA replication, DNA recombination and DNA repair. The protein is DNA ligase of Sulfurisphaera tokodaii (strain DSM 16993 / JCM 10545 / NBRC 100140 / 7) (Sulfolobus tokodaii).